A 456-amino-acid polypeptide reads, in one-letter code: MGEKAKANVLVFSFPIQGHINPLLQFSKRLLSKNVNVTFLTTSSTHNSILRRAITGGATALPLSFVPIDDGFEEDHPSTDTSPDYFAKFQENVSRSLSELISSMDPKPNAVVYDSCLPYVLDVCRKHPGVAAASFFTQSSTVNATYIHFLRGEFKEFQNDVVLPAMPPLKGNDLPVFLYDNNLCRPLFELISSQFVNVDDIDFFLVNSFDELEVEVLQWMKNQWPVKNIGPMIPSMYLDKRLAGDKDYGINLFNAQVNECLDWLDSKPPGSVIYVSFGSLAVLKDDQMIEVAAGLKQTGHNFLWVVRETETKKLPSNYIEDICDKGLIVNWSPQLQVLAHKSIGCFMTHCGWNSTLEALSLGVALIGMPAYSDQPTNAKFIEDVWKVGVRVKADQNGFVPKEEIVRCVGEVMEDMSEKGKEIRKNARRLMEFAREALSDGGNSDKNIDEFVAKIVR.

Residues serine 279, 332 to 334 (SPQ), 349 to 357 (HCGWNSTLE), and 371 to 374 (YSDQ) each bind UDP-alpha-D-glucose.

It belongs to the UDP-glycosyltransferase family. Expressed in leaves.

Its function is as follows. Glucosyltransferase that glucosylates jasmonate (JA) and JA derivatives. Also active on indole-3-acetic acid (IAA), 4-coumrate, cinnamate and caffeate. The polypeptide is UDP-glycosyltransferase 74D1 (UGT74D1) (Arabidopsis thaliana (Mouse-ear cress)).